The chain runs to 292 residues: AKT-interacting protein (292 aa).

The interval 1–63 is disordered; it reads MNPLWSMSAG…TSPAPAAQST (63 aa). Basic and acidic residues predominate over residues 14–23; it reads KRAEGEEKTL. Position 30 is a phosphoserine (S30). Residues 74 to 222 form the UBC core domain; it reads YLEYSLLAEF…VVDSVKVCTA (149 aa).

Belongs to the ubiquitin-conjugating enzyme family. FTS subfamily. Component of the FTS/Hook/FHIP complex (FHF complex), composed of AKTIP/FTS, FHIP1B, and one or more members of the Hook family of proteins HOOK1, HOOK2, and HOOK3. Interacts directly with HOOK1, HOOK2 and HOOK3. The FHF complex associates with the homotypic vesicular sorting complex (the HOPS complex). Also interacts with AKT1. May interact with FHIP1A. As to expression, ubiquitous. Highest expression in kidney, testis and brain and lowest in spleen and liver.

Its subcellular location is the cytoplasm. The protein resides in the cell membrane. Functionally, component of the FTS/Hook/FHIP complex (FHF complex). The FHF complex may function to promote vesicle trafficking and/or fusion via the homotypic vesicular protein sorting complex (the HOPS complex). Regulates apoptosis by enhancing phosphorylation and activation of AKT1. Increases release of TNFSF6 via the AKT1/GSK3B/NFATC1 signaling cascade. FHF complex promotes the distribution of AP-4 complex to the perinuclear area of the cell. The polypeptide is AKT-interacting protein (Aktip) (Mus musculus (Mouse)).